The sequence spans 420 residues: Gamma-glutamyl phosphate reductase (420 aa).

The protein belongs to the gamma-glutamyl phosphate reductase family.

It is found in the cytoplasm. It catalyses the reaction L-glutamate 5-semialdehyde + phosphate + NADP(+) = L-glutamyl 5-phosphate + NADPH + H(+). Its pathway is amino-acid biosynthesis; L-proline biosynthesis; L-glutamate 5-semialdehyde from L-glutamate: step 2/2. Its function is as follows. Catalyzes the NADPH-dependent reduction of L-glutamate 5-phosphate into L-glutamate 5-semialdehyde and phosphate. The product spontaneously undergoes cyclization to form 1-pyrroline-5-carboxylate. The chain is Gamma-glutamyl phosphate reductase from Chlorobaculum parvum (strain DSM 263 / NCIMB 8327) (Chlorobium vibrioforme subsp. thiosulfatophilum).